The following is a 349-amino-acid chain: Septin-2 (349 aa).

The Septin-type G domain maps to 33-305 (KGFEFTLMVV…ENFRSERLKR (273 aa)). A G1 motif region spans residues 43–50 (GESGLGKS). GTP-binding positions include 43–50 (GESGLGKS), Thr-77, Gly-103, 182–190 (KADTLTLKE), Gly-240, and Arg-255. The tract at residues 100–103 (DTPG) is G3 motif. The interval 181–184 (AKAD) is G4 motif. Residues 259–269 (WGVVEVENPEH) are important for dimerization.

This sequence belongs to the TRAFAC class TrmE-Era-EngA-EngB-Septin-like GTPase superfamily. Septin GTPase family. As to quaternary structure, septins polymerize into heterooligomeric protein complexes that form filaments, and associate with cellular membranes, actin filaments and microtubules. GTPase activity is required for filament formation. Can form heterooligomers with other family members and form filaments.

It localises to the cytoplasm. The protein resides in the cytoskeleton. The protein localises to the spindle. It is found in the cleavage furrow. Its subcellular location is the midbody. It localises to the cell cortex. The protein resides in the cell projection. The protein localises to the cilium membrane. Its function is as follows. Filament-forming cytoskeletal GTPase. Required for normal organization of the actin cytoskeleton. Plays a role in the biogenesis of polarized columnar-shaped epithelium by maintaining polyglutamylated microtubules, thus facilitating efficient vesicle transport, and by impeding MAP4 binding to tubulin. Required for the progression through mitosis. Forms a scaffold at the midplane of the mitotic splindle required to maintain CENPE localization at kinetochores and consequently chromosome congression. During anaphase, may be required for chromosome segregation and spindle elongation. Plays a role in ciliogenesis and collective cell movements. In cilia, required for the integrity of the diffusion barrier at the base of the primary cilium that prevents diffusion of transmembrane proteins between the cilia and plasma membranes. This is Septin-2 from Gallus gallus (Chicken).